We begin with the raw amino-acid sequence, 369 residues long: Putative FAD-dependent oxidoreductase LodB (369 aa).

FAD-binding positions include 10 to 14 (GGGPA) and Arg103.

FAD is required as a cofactor.

It localises to the cytoplasm. Is required for lysine-epsilon oxidase (LOD) activity in M.mediterranea. May be involved in the generation of the quinonic cofactor of LodA, leading to the active form of LodA containing a tyrosine-derived quinone cofactor. The protein is Putative FAD-dependent oxidoreductase LodB (lodB) of Marinomonas mediterranea (strain ATCC 700492 / JCM 21426 / NBRC 103028 / MMB-1).